A 306-amino-acid chain; its full sequence is UDP-3-O-acyl-N-acetylglucosamine deacetylase (306 aa).

3 residues coordinate Zn(2+): His79, His238, and Asp242. The active-site Proton donor is His265.

The protein belongs to the LpxC family. Zn(2+) serves as cofactor.

It carries out the reaction a UDP-3-O-[(3R)-3-hydroxyacyl]-N-acetyl-alpha-D-glucosamine + H2O = a UDP-3-O-[(3R)-3-hydroxyacyl]-alpha-D-glucosamine + acetate. Its pathway is glycolipid biosynthesis; lipid IV(A) biosynthesis; lipid IV(A) from (3R)-3-hydroxytetradecanoyl-[acyl-carrier-protein] and UDP-N-acetyl-alpha-D-glucosamine: step 2/6. Catalyzes the hydrolysis of UDP-3-O-myristoyl-N-acetylglucosamine to form UDP-3-O-myristoylglucosamine and acetate, the committed step in lipid A biosynthesis. The protein is UDP-3-O-acyl-N-acetylglucosamine deacetylase of Shewanella sp. (strain W3-18-1).